The sequence spans 445 residues: Phenylacetate-coenzyme A ligase (445 aa).

Belongs to the phenylacetyl-CoA ligase family. Monomer.

The catalysed reaction is 2-phenylacetate + ATP + CoA = phenylacetyl-CoA + AMP + diphosphate. The protein operates within aromatic compound metabolism; phenylacetate degradation. In terms of biological role, catalyzes the activation of phenylacetic acid (PA) to phenylacetyl-CoA (PA-CoA). Involved in the phenylalanine metabolism. This chain is Phenylacetate-coenzyme A ligase, found in Thermus thermophilus (strain ATCC BAA-163 / DSM 7039 / HB27).